We begin with the raw amino-acid sequence, 510 residues long: Glycerol kinase (510 aa).

Thr14 serves as a coordination point for ADP. ATP is bound by residues Thr14 and Thr15. Thr14 contributes to the sn-glycerol 3-phosphate binding site. Residue Arg18 participates in ADP binding. Arg84, Glu85, Tyr136, and Asp256 together coordinate sn-glycerol 3-phosphate. Glycerol-binding residues include Arg84, Glu85, Tyr136, Asp256, and Gln257. ADP-binding residues include Thr278, Gly322, Gly422, and Asn426. Positions 278, 322, and 422 each coordinate ATP.

The protein belongs to the FGGY kinase family.

The catalysed reaction is glycerol + ATP = sn-glycerol 3-phosphate + ADP + H(+). The protein operates within polyol metabolism; glycerol degradation via glycerol kinase pathway; sn-glycerol 3-phosphate from glycerol: step 1/1. Functionally, key enzyme in the regulation of glycerol uptake and metabolism. Catalyzes the phosphorylation of glycerol to yield sn-glycerol 3-phosphate. It also catalyzes the phosphorylation of dihydroxyacetone (DHA). Involved, together with the DHA kinase DhaKLM, in the metabolism of DHA. This is Glycerol kinase from Haloferax volcanii (strain ATCC 29605 / DSM 3757 / JCM 8879 / NBRC 14742 / NCIMB 2012 / VKM B-1768 / DS2) (Halobacterium volcanii).